The primary structure comprises 369 residues: tRNA/tmRNA (uracil-C(5))-methyltransferase (369 aa).

S-adenosyl-L-methionine-binding residues include Q190, Y218, N223, E239, and D301. The Nucleophile role is filled by C326. The active-site Proton acceptor is the E360.

This sequence belongs to the class I-like SAM-binding methyltransferase superfamily. RNA M5U methyltransferase family. TrmA subfamily.

The catalysed reaction is uridine(54) in tRNA + S-adenosyl-L-methionine = 5-methyluridine(54) in tRNA + S-adenosyl-L-homocysteine + H(+). The enzyme catalyses uridine(341) in tmRNA + S-adenosyl-L-methionine = 5-methyluridine(341) in tmRNA + S-adenosyl-L-homocysteine + H(+). In terms of biological role, dual-specificity methyltransferase that catalyzes the formation of 5-methyluridine at position 54 (m5U54) in all tRNAs, and that of position 341 (m5U341) in tmRNA (transfer-mRNA). The chain is tRNA/tmRNA (uracil-C(5))-methyltransferase from Vibrio atlanticus (strain LGP32) (Vibrio splendidus (strain Mel32)).